The following is a 490-amino-acid chain: Protein transport protein SEC9 (490 aa).

Residues 1 to 244 (MGIKKMFKKK…DLNDLPEEED (244 aa)) are disordered. Composition is skewed to basic and acidic residues over residues 9–21 (KKDPTEGEIRDEL) and 30–40 (SDNKTRQEKFG). Residues 58 to 80 (PVNPYANVNAGNGNGNPYAQQEA) are compositionally biased toward low complexity. Over residues 94–105 (SSPYDKTTNPYG) the composition is skewed to polar residues. The span at 140-151 (GGARASGRASGS) shows a compositional bias: low complexity. The segment covering 232 to 244 (ETLDLNDLPEEED) has biased composition (acidic residues). One can recognise a t-SNARE coiled-coil homology 1 domain in the interval 273 to 335 (RFIKQESVGS…KIADQKVKDL (63 aa)). Positions 389-410 (IKQGISQNATSSDVHQKYRSER) are disordered. Polar residues predominate over residues 392–401 (GISQNATSSD). The region spanning 427–489 (DEMEKELANN…HMNSARLNNI (63 aa)) is the t-SNARE coiled-coil homology 2 domain.

It belongs to the SNAP-25 family.

This Debaryomyces hansenii (strain ATCC 36239 / CBS 767 / BCRC 21394 / JCM 1990 / NBRC 0083 / IGC 2968) (Yeast) protein is Protein transport protein SEC9 (SEC9).